Here is a 262-residue protein sequence, read N- to C-terminus: Ribosomal RNA small subunit methyltransferase A (262 aa).

Residues Asn-20, Leu-22, Gly-47, Glu-68, Asp-90, and Asn-110 each coordinate S-adenosyl-L-methionine.

The protein belongs to the class I-like SAM-binding methyltransferase superfamily. rRNA adenine N(6)-methyltransferase family. RsmA subfamily.

It localises to the cytoplasm. It carries out the reaction adenosine(1518)/adenosine(1519) in 16S rRNA + 4 S-adenosyl-L-methionine = N(6)-dimethyladenosine(1518)/N(6)-dimethyladenosine(1519) in 16S rRNA + 4 S-adenosyl-L-homocysteine + 4 H(+). Its function is as follows. Specifically dimethylates two adjacent adenosines (A1518 and A1519) in the loop of a conserved hairpin near the 3'-end of 16S rRNA in the 30S particle. May play a critical role in biogenesis of 30S subunits. This chain is Ribosomal RNA small subunit methyltransferase A, found in Chlorobium phaeobacteroides (strain BS1).